The following is a 379-amino-acid chain: Armadillo repeat-containing X-linked protein 3 (379 aa).

Residues 1–6 (MGYARK) lie on the Mitochondrial intermembrane side of the membrane. Mitochondrion outer membrane (MOM)-targeting sequence regions lie at residues 1-6 (MGYARK) and 26-37 (RLTRGRKQNKEK). Residues 7 to 29 (VGWVTAGLVIGAGACYCIYRLTR) traverse the membrane as a helical; Signal-anchor segment. The Cytoplasmic segment spans residues 30 to 379 (GRKQNKEKMA…TERMFPKSQE (350 aa)). Residues 34–69 (NKEKMAEGGPGDVEDAGDCSGARYNDWSDDDDDSNE) form a disordered region. 3 positions are modified to phosphoserine: S61, S67, and S72. The segment at 89–98 (RARARARARA) is nuclear localization signal. A Phosphoserine modification is found at S110. ARM repeat units follow at residues 111-151 (PNSD…NNAA), 153-192 (AFNR…NLSV), and 233-272 (VTNE…NLAE).

It belongs to the eutherian X-chromosome-specific Armcx family. In terms of assembly, interacts (via ARM domain) with MIRO1, MIRO2 and TRAK2. The interaction with Miro is calcium-dependent. Interacts with Sox10.

The protein resides in the mitochondrion outer membrane. It localises to the cytoplasm. The protein localises to the nucleus. Regulates mitochondrial aggregation and transport in axons in living neurons. May link mitochondria to the Trak2-kinesin motor complex via its interaction with Miro and Trak2. Mitochondrial distribution and dynamics is regulated through Armcx3 protein degradation, which is promoted by PCK and negatively regulated by Wnt1. Enhances the Sox10-mediated transactivation of the neuronal acetylcholine receptor subunit alpha-3 and beta-4 subunit gene promoters. This chain is Armadillo repeat-containing X-linked protein 3 (Armcx3), found in Rattus norvegicus (Rat).